Here is a 101-residue protein sequence, read N- to C-terminus: Large ribosomal subunit protein uL23 (101 aa).

Belongs to the universal ribosomal protein uL23 family. Part of the 50S ribosomal subunit. Contacts protein L29, and trigger factor when it is bound to the ribosome.

In terms of biological role, one of the early assembly proteins it binds 23S rRNA. One of the proteins that surrounds the polypeptide exit tunnel on the outside of the ribosome. Forms the main docking site for trigger factor binding to the ribosome. In Corynebacterium efficiens (strain DSM 44549 / YS-314 / AJ 12310 / JCM 11189 / NBRC 100395), this protein is Large ribosomal subunit protein uL23.